Here is a 272-residue protein sequence, read N- to C-terminus: Troponin T, fast skeletal muscle (272 aa).

Acidic residues predominate over residues 1–50; that stretch reads MSDEETEQVEEQYEEEEEAQEEEVQEEAPEPEEVQEDAVAEEEREEDEEE. Positions 1–75 are disordered; the sequence is MSDEETEQVE…EKVDFDDIQK (75 aa). The residue at position 2 (serine 2) is an N-acetylserine. Serine 2 carries the post-translational modification Phosphoserine. A compositionally biased stretch (basic and acidic residues) spans 63–75; sequence PEGEKVDFDDIQK. The residue at position 91 (serine 91) is a Phosphoserine. Basic and acidic residues predominate over residues 114-156; it reads RAERAEQQRIRAEKEREPQNRLAEEKARREEEDAKRRAEDDMK. Positions 114-193 are disordered; sequence RAERAEQQRI…TAREMKKKIL (80 aa). 3 positions are modified to phosphoserine: serine 162, serine 169, and serine 170. The span at 184–193 shows a compositional bias: basic and acidic residues; sequence TAREMKKKIL. At serine 206 the chain carries Phosphoserine. At tyrosine 222 the chain carries Phosphotyrosine. Residues 248–272 are disordered; the sequence is RIDQAQKHSKKAGATAKGKVGGRWK.

It belongs to the troponin T family. As to expression, expressed predominantly in skeletal muscle.

Functionally, troponin T is the tropomyosin-binding subunit of troponin, the thin filament regulatory complex which confers calcium-sensitivity to striated muscle actomyosin ATPase activity. The chain is Troponin T, fast skeletal muscle (Tnnt3) from Mus musculus (Mouse).